We begin with the raw amino-acid sequence, 292 residues long: Probable endonuclease 4 (292 aa).

9 residues coordinate Zn(2+): His69, His109, Glu145, Asp179, His182, His216, Asp229, His231, and Glu261.

This sequence belongs to the AP endonuclease 2 family. It depends on Zn(2+) as a cofactor.

It carries out the reaction Endonucleolytic cleavage to 5'-phosphooligonucleotide end-products.. Functionally, endonuclease IV plays a role in DNA repair. It cleaves phosphodiester bonds at apurinic or apyrimidinic (AP) sites, generating a 3'-hydroxyl group and a 5'-terminal sugar phosphate. The sequence is that of Probable endonuclease 4 from Desulfotalea psychrophila (strain LSv54 / DSM 12343).